The sequence spans 213 residues: Carboxysome shell protein CcmP (213 aa).

BMC circularly permuted domains lie at 4–106 (ELRS…RLKP) and 107–211 (KIVS…GDRS). A Probably important for pore gating motif is present at residues 69-70 (ER).

It belongs to the EutL/PduB family. A dimer of stacked trimers, the same faces interact.

It localises to the carboxysome. Its function is as follows. Probably part of the carboxysome shell, a polyhedral inclusion where RuBisCO (ribulose bisphosphate carboxylase, rbcL-rbcS) is sequestered. It is thought that this protein controls transport of RuBisCO reactants in and out of the carboxysome; residual densities in the 4 X-ray structures suggest that differing compounds bind in interior pockets, depending on the open or closed state of the pore. In Synechococcus elongatus (strain ATCC 33912 / PCC 7942 / FACHB-805) (Anacystis nidulans R2), this protein is Carboxysome shell protein CcmP.